A 413-amino-acid chain; its full sequence is Enolase (413 aa).

Position 170 (Gln-170) interacts with (2R)-2-phosphoglycerate. Glu-212 (proton donor) is an active-site residue. Mg(2+) is bound by residues Asp-245, Glu-286, and Asp-313. 4 residues coordinate (2R)-2-phosphoglycerate: Lys-338, Arg-367, Ser-368, and Lys-389. Lys-338 (proton acceptor) is an active-site residue.

It belongs to the enolase family. It depends on Mg(2+) as a cofactor.

It localises to the cytoplasm. The protein resides in the secreted. The protein localises to the cell surface. The enzyme catalyses (2R)-2-phosphoglycerate = phosphoenolpyruvate + H2O. The protein operates within carbohydrate degradation; glycolysis; pyruvate from D-glyceraldehyde 3-phosphate: step 4/5. Its function is as follows. Catalyzes the reversible conversion of 2-phosphoglycerate (2-PG) into phosphoenolpyruvate (PEP). It is essential for the degradation of carbohydrates via glycolysis. The sequence is that of Enolase from Neorickettsia sennetsu (strain ATCC VR-367 / Miyayama) (Ehrlichia sennetsu).